Consider the following 366-residue polypeptide: Chorismate synthase (366 aa).

Residues Arg-48 and Arg-54 each contribute to the NADP(+) site. FMN-binding positions include 125 to 127 (RSS), 238 to 239 (NA), Gly-278, 293 to 297 (KPTSS), and Arg-319.

Belongs to the chorismate synthase family. In terms of assembly, homotetramer. FMNH2 is required as a cofactor.

It catalyses the reaction 5-O-(1-carboxyvinyl)-3-phosphoshikimate = chorismate + phosphate. Its pathway is metabolic intermediate biosynthesis; chorismate biosynthesis; chorismate from D-erythrose 4-phosphate and phosphoenolpyruvate: step 7/7. Functionally, catalyzes the anti-1,4-elimination of the C-3 phosphate and the C-6 proR hydrogen from 5-enolpyruvylshikimate-3-phosphate (EPSP) to yield chorismate, which is the branch point compound that serves as the starting substrate for the three terminal pathways of aromatic amino acid biosynthesis. This reaction introduces a second double bond into the aromatic ring system. The sequence is that of Chorismate synthase from Methylococcus capsulatus (strain ATCC 33009 / NCIMB 11132 / Bath).